Consider the following 96-residue polypeptide: Integration host factor subunit beta (96 aa).

It belongs to the bacterial histone-like protein family. In terms of assembly, heterodimer of an alpha and a beta chain.

This protein is one of the two subunits of integration host factor, a specific DNA-binding protein that functions in genetic recombination as well as in transcriptional and translational control. This Dichelobacter nodosus (strain VCS1703A) protein is Integration host factor subunit beta.